A 2684-amino-acid polypeptide reads, in one-letter code: Probable polyketide synthase 27 (2684 aa).

In terms of domain architecture, Ketosynthase family 3 (KS3) spans 11-442 (CGDVAIIGIG…GSNVCLILSE (432 aa)). Residues Cys183, His322, and His365 each act as for beta-ketoacyl synthase activity in the active site. Positions 650-683 (GVSADIIVGHSLGEMSSSYSSGMIDFETLCYLIY) are acyl/malonyl transferases. Ser660 serves as the catalytic For acyl/malonyl transferase activity. Positions 958–1087 (HEKITSEGPP…GNFSLFKHNS (130 aa)) are N-terminal hotdog fold. In terms of domain architecture, PKS/mFAS DH spans 958 to 1276 (HEKITSEGPP…CTSVSLVNPR (319 aa)). Catalysis depends on His999, which acts as the Proton acceptor; for dehydratase activity. A C-terminal hotdog fold region spans residues 1104–1276 (NFTTISKQEF…CTSVSLVNPR (173 aa)). Asp1173 serves as the catalytic Proton donor; for dehydratase activity. Positions 1202 to 1221 (IPSSSSSSKDDNDCDSNNNN) are disordered. The Carrier domain occupies 2585–2662 (SDNEFIHSTI…QSIDIIKFGY (78 aa)). An O-(pantetheine 4'-phosphoryl)serine modification is found at Ser2622.

It depends on pantetheine 4'-phosphate as a cofactor.

Its function is as follows. Probable polyketide synthase. The protein is Probable polyketide synthase 27 (pks27) of Dictyostelium discoideum (Social amoeba).